Reading from the N-terminus, the 291-residue chain is Phosphatidylglycerol--prolipoprotein diacylglyceryl transferase (291 aa).

Helical transmembrane passes span 21 to 41, 60 to 80, 96 to 116, 130 to 150, 198 to 218, 225 to 245, and 260 to 280; these read VALH…MWLA, LLYA…VLFY, WDGG…MIIF, FIAP…FING, SQLY…NLFI, GAVS…VEFF, and ISMG…MMVW. Arg-143 serves as a coordination point for a 1,2-diacyl-sn-glycero-3-phospho-(1'-sn-glycerol).

Belongs to the Lgt family.

It is found in the cell inner membrane. It catalyses the reaction L-cysteinyl-[prolipoprotein] + a 1,2-diacyl-sn-glycero-3-phospho-(1'-sn-glycerol) = an S-1,2-diacyl-sn-glyceryl-L-cysteinyl-[prolipoprotein] + sn-glycerol 1-phosphate + H(+). Its pathway is protein modification; lipoprotein biosynthesis (diacylglyceryl transfer). Its function is as follows. Catalyzes the transfer of the diacylglyceryl group from phosphatidylglycerol to the sulfhydryl group of the N-terminal cysteine of a prolipoprotein, the first step in the formation of mature lipoproteins. The polypeptide is Phosphatidylglycerol--prolipoprotein diacylglyceryl transferase (Salmonella agona (strain SL483)).